Reading from the N-terminus, the 870-residue chain is Radial spoke head 10 homolog B (870 aa).

The span at 1-16 (MVKEKKKADKKGEKSA) shows a compositional bias: basic and acidic residues. The tract at residues 1 to 43 (MVKEKKKADKKGEKSARSPSSLSDNLDFSKQDGNTTRQEMSPA) is disordered. Residues 17–39 (RSPSSLSDNLDFSKQDGNTTRQE) show a composition bias toward polar residues. MORN repeat units follow at residues 86-108 (YEGE…GGCT), 109-131 (YRGM…DGLK), 132-154 (YEGD…DGSM), 155-177 (YEGE…TQPV), 179-201 (YIGH…QEGT), 204-226 (YEGD…SGNI), 227-249 (YEGQ…TTNE), 251-273 (YTGR…LKRI), 284-306 (YIGE…SGAM), and 307-329 (YDGE…NGRV). The interval 674–704 (NKSPSAVMSHESDAAHSDSARSSSSKLELSP) is disordered. Residues 683–692 (HESDAAHSDS) show a composition bias toward basic and acidic residues. Low complexity predominate over residues 693–703 (ARSSSSKLELS). Residues 784-811 (KEKIRADRLRSTAQAQQRKMEDDELEAR) adopt a coiled-coil conformation. The segment at 840–870 (VSSSHLILDPPKEDVTVSPSSKTITSKKKKK) is disordered.

As to quaternary structure, interacts with RSPH6A. Does not appear to be part of the axonemal radial spoke complexes 1 or 2.

Its subcellular location is the cytoplasm. The protein resides in the cytoskeleton. It is found in the cilium axoneme. The protein localises to the cell projection. It localises to the cilium. Its subcellular location is the flagellum. Its function is as follows. May function as part of the axonemal radial spoke complex 3 (RS3). Radial spoke complexes are important for ciliary motility. This is Radial spoke head 10 homolog B (RSPH10B) from Homo sapiens (Human).